The sequence spans 553 residues: Transcription factor MYB65 (553 aa).

The interval 1–44 (MSYTTATADSDDGMHSSIHNESPAPDSISNGCRSRGKRSVLKKG) is disordered. HTH myb-type domains lie at 38–90 (RSVL…ANHL) and 91–145 (RPNL…KRRQ). DNA-binding regions (H-T-H motif) lie at residues 66-90 (WNAV…ANHL) and 118-141 (WAQM…NTRI).

In terms of tissue distribution, mostly expressed in roots (e.g. root tips), stems, pollen, shoot apices, flowers and floral shoot tips, and, to a lower extent, in leaves and siliques.

The protein localises to the nucleus. In terms of biological role, transcriptional activator of alpha-amylase expression that binds to 5'-CAACTGTC-3' motif in target gene promoter. In vegetative tissues, inhibits growth by reducing cell proliferation. Promotes the expression of aleurone-related genes (e.g. CP1, CP, GASA1, BXL1 and BXL2) in seeds. Together with MYB33 and MYB101, promotes the programmed cell death (PCD) the vacuolation of protein storage vacuoles (PSVs) in the aleurone layers during seed germination. Together with MYB33, facilitates anther and tapetum development. The chain is Transcription factor MYB65 from Arabidopsis thaliana (Mouse-ear cress).